A 478-amino-acid polypeptide reads, in one-letter code: MLCTIIRGPSFLEARNQLLRSLKKCRCFEMRADLLTVSDAELQKLILLAPISVLTWKKPPSCTPQAWVKKIQSLAKLHPTYLDLDKDFPEEEILHIRHLHPNIKIIRSLHTSEHTDITQLYTQMLASSIDYYKLAVSPASTTDLLNICRQKHSLPQNTTVLCLGKIGQSSRILSPILQNPFTYTIPTGADPVAPGQLSLNHHYFYNFTNLSPQSQICALIGDTSRSIGHLTHNPFFSQLSIPCPYVKLPLTPQELPEFFSSIRALPFLGISVTSPLKTAIIPFLDKQDSSVKLSGSCNTLVIRQGEIIGYDTDGEGLFSVLTQHNMDLSNQRVAILGAGGAARSIAARLSRTGCELLIFNRTKIHAEAIASRYQAQAFDIKDLPLHSVSLIINCLPPSSIIPQALAPLIVDINTLPKHNSFTQYARLKGCSIIYGHEMFAQQALLQFRLWFPTHSFNHLEKNFSRRAAVLASLFSIAA.

The tract at residues 1 to 208 is 3-dehydroquinate dehydratase; it reads MLCTIIRGPS…LNHHYFYNFT (208 aa). 3-dehydroquinate is bound by residues S21, 29 to 31, and 55 to 57; these read EMR and TWK. The active-site Proton donor/acceptor; for 3-dehydroquinate dehydratase activity is H110. The active-site Schiff-base intermediate with substrate; for 3-dehydroquinate dehydratase activity is the K133. 3-dehydroquinate contacts are provided by R171 and Q196. The segment at 209–478 is shikimate 5-dehydrogenase; it reads NLSPQSQICA…VLASLFSIAA (270 aa). 226 to 228 provides a ligand contact to shikimate; the sequence is SIG. K277 acts as the Proton acceptor; for shikimate dehydrogenase activity in catalysis. Shikimate is bound by residues N298 and D313. Residues 337–341, 360–362, and G435 each bind NADP(+); these read GAGGA and NRT. Q442 contributes to the shikimate binding site.

This sequence in the N-terminal section; belongs to the type-I 3-dehydroquinase family. In the C-terminal section; belongs to the shikimate dehydrogenase family.

The enzyme catalyses 3-dehydroquinate = 3-dehydroshikimate + H2O. It catalyses the reaction shikimate + NADP(+) = 3-dehydroshikimate + NADPH + H(+). It functions in the pathway metabolic intermediate biosynthesis; chorismate biosynthesis; chorismate from D-erythrose 4-phosphate and phosphoenolpyruvate: step 3/7. It participates in metabolic intermediate biosynthesis; chorismate biosynthesis; chorismate from D-erythrose 4-phosphate and phosphoenolpyruvate: step 4/7. Bifunctional enzyme that catalyzes two sequential steps of the aromatic amino acids biosynthetic pathway. In the first reaction, the AroD domain catalyzes the cis-dehydration of 3-dehydroquinate (DHQ) and introduces the first double bond of the aromatic ring to yield 3-dehydroshikimate; in the second reaction, the AroE domain catalyzes the reversible NADPH linked reduction of 3-dehydroshikimate (DHSA) to yield shikimate (SA). This chain is Shikimate biosynthesis protein AroDE, found in Chlamydia muridarum (strain MoPn / Nigg).